Here is a 187-residue protein sequence, read N- to C-terminus: Large ribosomal subunit protein uL22 (187 aa).

Residues 159 to 171 (VSKPTDDAAPKVK) are compositionally biased toward basic and acidic residues. The segment at 159 to 187 (VSKPTDDAAPKVKKESKRKQRRQLARGEF) is disordered. Residues 172-187 (KESKRKQRRQLARGEF) are compositionally biased toward basic residues.

This sequence belongs to the universal ribosomal protein uL22 family.

In Caenorhabditis elegans, this protein is Large ribosomal subunit protein uL22 (rpl-17).